Reading from the N-terminus, the 942-residue chain is Lambda-carrageenase (942 aa).

A signal peptide spans 1-25 (MKIKILSAMIASSLLIGCVIPTVKA).

As to quaternary structure, monomer.

The protein localises to the secreted. The catalysed reaction is Endohydrolysis of (1-&gt;4)-beta-linkages in the backbone of lambda-carrageenan, resulting in the tetrasaccharide alpha-D-Galp2,6S2-(1-&gt;3)-beta-D-Galp2S-(1-&gt;4)-alpha-D-Galp2,6S2-(1-&gt;3)-D-Galp2S.. Functionally, hydrolyzes lambda-carrageenan with inversion of anomeric configuration. Does not hydrolyze iota- and kappa-carrageenans, agarose or porphyran. The protein is Lambda-carrageenase of Pseudoalteromonas sp.